The primary structure comprises 353 residues: Outer membrane protein P5 (353 aa).

Positions 1-21 (MKKTAIALVVAGLAAASVAQA) are cleaved as a signal peptide. The next 8 membrane-spanning stretches (beta stranded) occupy residues 27-37 (TFYAGVKAGQA), 58-69 (SFTYGVFGGYQI), 77-85 (LAVELGYDD), 104-115 (HGTHLSLKGSYE), 120-128 (LDVYGKAGV), 158-167 (GLFAVGAEYA), 172-179 (LAVRLEYQ), and 205-213 (SINAGISYR). One can recognise an OmpA-like domain in the interval 227–353 (VVSKTFSLNS…RVEIAVNGTK (127 aa)). Residues C326 and C338 are joined by a disulfide bond.

Belongs to the outer membrane OOP (TC 1.B.6) superfamily. OmpA family. As to quaternary structure, monomer and homodimer.

It is found in the cell outer membrane. In terms of biological role, with TolR probably plays a role in maintaining the position of the peptidoglycan cell wall in the periplasm. Acts as a porin with low permeability that allows slow penetration of small solutes; an internal gate slows down solute passage. Its function is as follows. Reconstitution in planar bilayers with lithium dodecyl sulfate-solublized P5 yields narrow pores (58 pS conductance) with a low probability of opening, whereas n-octyl-bD-glucopyranoside-solubilized P5 forms large pores (1.1 nS conductance) with high open probability. The large pore easily converts to the smaller pore at room temperature; at 42 degrees Celsius the smaller pore converts to the larger one. The polypeptide is Outer membrane protein P5 (Haemophilus influenzae (strain ATCC 51907 / DSM 11121 / KW20 / Rd)).